The primary structure comprises 838 residues: DNA gyrase subunit A (838 aa).

Residue T2 is modified to N-acetylthreonine. A Topo IIA-type catalytic domain is found at 41 to 510; that stretch reads LPEVRDGLKP…ADGDVSDEDL (470 aa). Residue Y129 is the O-(5'-phospho-DNA)-tyrosine intermediate of the active site. D504, S506, E508, and D515 together coordinate Ca(2+). In terms of domain architecture, EF-hand spans 504–516; it reads DVSDEDLIAREDV. The segment at 514-838 is C-terminal domain CTD; sequence EDVVVTITET…DANGADQTGN (325 aa). The GyrA-box motif lies at 537–543; the sequence is QKRGGKG. The GyrA-box-1 signature appears at 743–749; it reads QGRGGKG.

It belongs to the type II topoisomerase GyrA/ParC subunit family. As to quaternary structure, heterotetramer, composed of two GyrA and two GyrB chains. In the heterotetramer, GyrA contains the active site tyrosine that forms a transient covalent intermediate with DNA, while GyrB binds cofactors and catalyzes ATP hydrolysis. Ca(2+) is required as a cofactor.

The protein resides in the cytoplasm. The enzyme catalyses ATP-dependent breakage, passage and rejoining of double-stranded DNA.. With respect to regulation, DNA supercoiling inhibited by (fluoro)quinoline antibiotics such as sparfloxacin and levofloxacin, which usually act on GyrA. DNA supercoiling inhibited by the coumarin antibiotic novobiocin which acts on GyrB. Quinolones lead to gyrase-mediated dsDNA cleavage while preventing reclosure. DNA supercoiling activity inhibited by aminopyrazinamide and pyrrolamide derivatives, probably via effects on the GyrB subunit. DNA relaxation inhibited by ATP and its analogs. DNA supercoiling, relaxation, decatenation and quinolone-promoted DNA cleavage are inhibited by MfpA (50% inhibition occurs at 2 uM), inhibition of gyrase activities is enhanced in a concentration-dependent manner by MfpA. A type II topoisomerase that negatively supercoils closed circular double-stranded (ds) DNA in an ATP-dependent manner to maintain chromosomes in an underwound state, while in the absence of ATP it relaxes supercoiled dsDNA. Also catalyzes the interconversion of other topological isomers of dsDNA rings, including catenanes. Gyrase from M.tuberculosis has higher decatenation than supercoiling activity compared to E.coli; as M.tuberculosis only has 1 type II topoisomerase, gyrase has to fulfill the decatenation function of topoisomerase IV as well. At comparable concentrations M.tuberculosis gyrase cannot introduce as many negative supercoils into DNA as the E.coli enzyme, and its ATPase activity is lower, perhaps because it does not couple DNA wrapping and ATP binding as well as E.coli. Functionally, negative supercoiling favors strand separation, and DNA replication, transcription, recombination and repair, all of which involve strand separation. Type II topoisomerases break and join 2 DNA strands simultaneously in an ATP-dependent manner. The polypeptide is DNA gyrase subunit A (Mycobacterium tuberculosis (strain ATCC 25618 / H37Rv)).